Here is a 229-residue protein sequence, read N- to C-terminus: Potassium/proton antiporter CemA (229 aa).

3 helical membrane passes run 6–26 (AFIP…ISLC), 107–127 (ILHF…SFWG), and 189–209 (ILSG…KYWI).

It belongs to the CemA family.

It localises to the plastid. The protein resides in the chloroplast inner membrane. It catalyses the reaction K(+)(in) + H(+)(out) = K(+)(out) + H(+)(in). Contributes to K(+)/H(+) antiport activity by supporting proton efflux to control proton extrusion and homeostasis in chloroplasts in a light-dependent manner to modulate photosynthesis. Prevents excessive induction of non-photochemical quenching (NPQ) under continuous-light conditions. Indirectly promotes efficient inorganic carbon uptake into chloroplasts. This chain is Potassium/proton antiporter CemA, found in Nasturtium officinale (Watercress).